A 335-amino-acid chain; its full sequence is Cytoplasmic envelopment protein 2 (335 aa).

The protein belongs to the herpesviridae cytoplasmic envelopment protein 2 family. In terms of assembly, interacts with cytoplasmic envelopment protein 3 and with the capsid.

It localises to the virion tegument. The protein resides in the host cytoplasm. The protein localises to the host nucleus. Plays a critical role in cytoplasmic virus egress. Participates in the final step of tegumentation and envelope acquisition within the host cytoplasm by directly interacting with the capsid. Upon virion binding to target cell, a signaling cascade is triggered to disrupt the interaction with the capsid, thereby preparing capsid uncoating. This is Cytoplasmic envelopment protein 2 (U65) from Human herpesvirus 6B (strain Z29) (HHV-6 variant B).